Consider the following 330-residue polypeptide: tRNA U34 carboxymethyltransferase (330 aa).

Residues Lys-91, Trp-105, Lys-110, Gly-130, 152–154 (DPS), 181–182 (IE), Met-196, Tyr-200, and Arg-315 contribute to the carboxy-S-adenosyl-L-methionine site.

This sequence belongs to the class I-like SAM-binding methyltransferase superfamily. CmoB family. In terms of assembly, homotetramer.

The catalysed reaction is carboxy-S-adenosyl-L-methionine + 5-hydroxyuridine(34) in tRNA = 5-carboxymethoxyuridine(34) in tRNA + S-adenosyl-L-homocysteine + H(+). Functionally, catalyzes carboxymethyl transfer from carboxy-S-adenosyl-L-methionine (Cx-SAM) to 5-hydroxyuridine (ho5U) to form 5-carboxymethoxyuridine (cmo5U) at position 34 in tRNAs. The protein is tRNA U34 carboxymethyltransferase of Shewanella oneidensis (strain ATCC 700550 / JCM 31522 / CIP 106686 / LMG 19005 / NCIMB 14063 / MR-1).